The sequence spans 190 residues: Prostaglandin-H2 D-isomerase (190 aa).

The N-terminal stretch at 1–22 (MATHHTLWMGLALLGVLGDLQA) is a signal peptide. N-linked (GlcNAc...) asparagine glycosylation occurs at Asn-51. The Nucleophile role is filled by Cys-65. Residue Asn-78 is glycosylated (N-linked (GlcNAc...) asparagine). Cys-89 and Cys-186 form a disulfide bridge.

The protein belongs to the calycin superfamily. Lipocalin family. Monomer.

The protein resides in the rough endoplasmic reticulum. The protein localises to the nucleus membrane. It localises to the golgi apparatus. It is found in the cytoplasm. Its subcellular location is the perinuclear region. The protein resides in the secreted. The catalysed reaction is prostaglandin H2 = prostaglandin D2. In terms of biological role, catalyzes the conversion of PGH2 to PGD2, a prostaglandin involved in smooth muscle contraction/relaxation and a potent inhibitor of platelet aggregation. Involved in a variety of CNS functions, such as sedation, NREM sleep and PGE2-induced allodynia, and may have an anti-apoptotic role in oligodendrocytes. Binds small non-substrate lipophilic molecules, including biliverdin, bilirubin, retinal, retinoic acid and thyroid hormone, and may act as a scavenger for harmful hydrophobic molecules and as a secretory retinoid and thyroid hormone transporter. Possibly involved in development and maintenance of the blood-brain, blood-retina, blood-aqueous humor and blood-testis barrier. It is likely to play important roles in both maturation and maintenance of the central nervous system and male reproductive system. Involved in PLA2G3-dependent maturation of mast cells. PLA2G3 is secreted by immature mast cells and acts on nearby fibroblasts upstream to PTDGS to synthesize PGD2, which in turn promotes mast cell maturation and degranulation via PTGDR. This Gorilla gorilla gorilla (Western lowland gorilla) protein is Prostaglandin-H2 D-isomerase (PTGDS).